Consider the following 1198-residue polypeptide: MSAEASPETGRFRTKSSPELFFPATDSEGEEQNDVPLTIVHPTQSTSSKFSINIASSSRPQHGITTGDFEATSQTSAHDNVDDDFSIVGHNPASSHPQGTIVAPRRKRSLQQAHSHHSSSSSSPVPSAPVIRADFRKGFLGEFVCEGWSLSKGRGYCSPGTKIVIERPKSKSTDVGAPKPGRKDSGPVRLVNGKVVGGVKSKQMTLGSMMAKKVEPAKKVKATTDQIIRFRNERGFEIGRLSIHEAGFLAHLLDTGVIQLSGNVIDCPQNLTTGCTILLNIKVYLARKAFENFGKHKREEHFSFWKDQRETAMEEAMRLRKDSLRSLFERIGVKPIQSSALSKVTPIQGVLNRQKGPDLEGSRLRSSPSTSTAEEKGKGRAAMPAVDDDGEDSGDEAEKLDEKQMNEIDSIYRKAQQGDTRLDEMDPPSTFLYTLRPYQKQALTWMNAREKGDSSVRNESLHPLWEEYLFKKDQLPGEPIEISDDDEQPDSTRKFYWNPYSGELSLKFPTSQNLSRGGILADAMGMGKTCMMASLIHTNREEKPAGNLESQTRDGVEGEIDEEPASKRIKFKQVTLSNQWRAVPTAPKVESFPRATLVVCPVSLAAQWHDELRKMSQQGSINSYVWYGGDRVDIEALLAGDGKERVDVIVTSYGTLTSEYQKWLRTKDRPNYEGGSLYDHEFLRIVLDEAHNIRNRLAMVSKACYELKGQRRWALTGTPIVNRLEDLYSLLHFLRITPWGNYSFFRSFVTVPFLNQDHKALNVVQYILESCLLRREKTMRDKDGRLIVDLPPKTVEIKVLQFSRAERQIYKFLEERAKKRFIDLDADGRAMSNYTSILAMLMKLRQCVDHPLLVLGKSGEDGELGEKILESGAGNGEGNLRDMIAMYAGGIRAETPEDVDKAYAAKVLKELGEQEDTPICELCSNEMFDEVLLPCYHRSCQDCIVEWIGTCEDQNKIASCPSCGKGPIKLADLRSVQRRHKRVNPITDAYPGGRDPNLKSSNDTTVTLGKVDLVTSTKLRALLRQLEEIRQEDPKAKALVFSQFTSFLDLIEATLTKQGIRWLRFDGTMSQAQRANTIEEFGRKTNEPLILLISLKAGGVGLNLTMANYVFLMDTWWNEAIEQQAIDRVHRLGQNKPVYVTRYIIKGTVEKRIMKIQRSKTALVNASLSNGAKTKETTLADIKKIFGMDEEDSEGEVY.

Disordered regions lie at residues 1 to 129 (MSAE…PSAP) and 348 to 401 (QGVL…EKLD). Low complexity predominate over residues 45–58 (STSSKFSINIASSS). Residues 104–117 (PRRKRSLQQAHSHH) are compositionally biased toward basic residues. A compositionally biased stretch (low complexity) spans 118–129 (SSSSSSPVPSAP). A compositionally biased stretch (acidic residues) spans 386–395 (VDDDGEDSGD). A Helicase ATP-binding domain is found at 509 to 737 (PTSQNLSRGG…YSLLHFLRIT (229 aa)). 522–529 (DAMGMGKT) is a binding site for ATP. Residues 541-564 (EEKPAGNLESQTRDGVEGEIDEEP) form a disordered region. Residues 688-691 (DEAH) carry the DEAH box motif. The RING-type zinc-finger motif lies at 920–964 (CELCSNEMFDEVLLPCYHRSCQDCIVEWIGTCEDQNKIASCPSCG). The Helicase C-terminal domain occupies 1021–1180 (ALLRQLEEIR…GAKTKETTLA (160 aa)).

It belongs to the SNF2/RAD54 helicase family.

It localises to the cytoplasm. It is found in the nucleus. Its function is as follows. Probable helicase, member of the UBC2/RAD6 epistasis group. Functions with DNA repair protein RAD18 in error-free postreplication DNA repair. Involved in the maintenance of wild-type rates of instability of simple repetitive sequences such as poly(GT) repeats. Seems to be involved in maintaining a balance which acts in favor of error-prone non-homologous joining during DNA double-strand breaks repairs. This chain is DNA repair protein RAD5 (RAD5), found in Cryptococcus neoformans var. neoformans serotype D (strain JEC21 / ATCC MYA-565) (Filobasidiella neoformans).